A 540-amino-acid chain; its full sequence is Arylsulfatase K (540 aa).

Residues M1 to D22 form the signal peptide. Residues D44 and C84 each coordinate Ca(2+). The active-site Nucleophile is C84. 3-oxoalanine (Cys) is present on C84. N112 carries an N-linked (GlcNAc...) asparagine glycan. Position 132 (K132) interacts with substrate. N197 is a glycosylation site (N-linked (GlcNAc...) asparagine). H255 contacts substrate. N266 carries N-linked (GlcNAc...) asparagine glycosylation. Ca(2+)-binding residues include D317 and H318. N379, N417, and N502 each carry an N-linked (GlcNAc...) asparagine glycan.

This sequence belongs to the sulfatase family. The cofactor is Ca(2+). Post-translationally, the conversion to 3-oxoalanine (also known as C-formylglycine, FGly), of a serine or cysteine residue in prokaryotes and of a cysteine residue in eukaryotes, is critical for catalytic activity. In terms of processing, the 75-kDa precursor undergoes proteolytic processing to yield a 23 kDa form. N-glycosylated with both high mannose and complex type sugars.

It localises to the secreted. The protein resides in the lysosome. The enzyme catalyses an aryl sulfate + H2O = a phenol + sulfate + H(+). It carries out the reaction Hydrolysis of the 2-sulfate groups of the 2-O-sulfo-D-glucuronate residues of chondroitin sulfate, heparin and heparitin sulfate.. In terms of biological role, catalyzes the hydrolysis of pseudosubstrates such as p-nitrocatechol sulfate and p-nitrophenyl sulfate. Catalyzes the hydrolysis of the 2-sulfate groups of the 2-O-sulfo-D-glucuronate residues of chondroitin sulfate, heparin and heparitin sulfate. Acts selectively on 2-sulfoglucuronate and lacks activity against 2-sulfoiduronate. In Bos taurus (Bovine), this protein is Arylsulfatase K (ARSK).